The sequence spans 327 residues: MQKVFIALTDHKRLDEFLAKELQISKNQVLNLIKEGLVFCQKKEVKKGGLALKEGDEITLLTPKITPKPLKKELDLEIEVIFEDEDLLVLNKPPNLVVHKALSVKEPTLVDWLEFKNYELSNLGLKERYGIVHRLDKDTSGGIVIAKNNFTHVHLSEQLKTKMMGRYYIALLSTPLKEEKMSVECYLTRNPNNRLKMIALKAVKKEKSRYSKSEFISLLTSQNNLNLIGAKLFTGRTHQIRAHLEYLNRHIIGDNLYGLNGALPKEEIRIMLHAYLIEFKHPRSEQKLRFKVPLLKDMLEYLKKVFDKENLDEVLDEEKILHAFIAK.

The 68-residue stretch at 12 to 79 folds into the S4 RNA-binding domain; the sequence is KRLDEFLAKE…LKKELDLEIE (68 aa). The active site involves aspartate 136.

This sequence belongs to the pseudouridine synthase RluA family.

It catalyses the reaction a uridine in RNA = a pseudouridine in RNA. This is an uncharacterized protein from Helicobacter pylori (strain ATCC 700392 / 26695) (Campylobacter pylori).